The chain runs to 130 residues: Small ribosomal subunit protein uS8 (130 aa).

It belongs to the universal ribosomal protein uS8 family. As to quaternary structure, part of the 30S ribosomal subunit.

One of the primary rRNA binding proteins, it binds directly to 16S rRNA central domain where it helps coordinate assembly of the platform of the 30S subunit. This Thermococcus kodakarensis (strain ATCC BAA-918 / JCM 12380 / KOD1) (Pyrococcus kodakaraensis (strain KOD1)) protein is Small ribosomal subunit protein uS8.